The primary structure comprises 355 residues: Adenine deaminase (355 aa).

The Zn(2+) site is built by His24, His26, and His204. The active-site Proton donor is the Glu207. Zn(2+) is bound at residue Asp285. Asp286 lines the substrate pocket.

This sequence belongs to the metallo-dependent hydrolases superfamily. Adenosine and AMP deaminases family. Adenine deaminase type 2 subfamily. It depends on Zn(2+) as a cofactor.

It carries out the reaction adenine + H2O + H(+) = hypoxanthine + NH4(+). Its function is as follows. Catalyzes the hydrolytic deamination of adenine to hypoxanthine. Plays an important role in the purine salvage pathway and in nitrogen catabolism. The polypeptide is Adenine deaminase (Geotalea uraniireducens (strain Rf4) (Geobacter uraniireducens)).